The chain runs to 257 residues: UPF0246 protein ECA3888 (257 aa).

The protein belongs to the UPF0246 family.

In Pectobacterium atrosepticum (strain SCRI 1043 / ATCC BAA-672) (Erwinia carotovora subsp. atroseptica), this protein is UPF0246 protein ECA3888.